We begin with the raw amino-acid sequence, 484 residues long: PTS system N-acetylmuramic acid-specific EIIBC component (484 aa).

Residues 1-89 (MAKITTSMIQ…NEMMEGEEDN (89 aa)) enclose the PTS EIIB type-1 domain. Cysteine 28 serves as the catalytic Phosphocysteine intermediate; for EIIB activity. A disordered region spans residues 83–106 (MEGEEDNSASTTAESRDLKDVASE). The span at 96–106 (ESRDLKDVASE) shows a compositional bias: basic and acidic residues. The 361-residue stretch at 124 to 484 (SKFATIFTPL…FFGTKNVDLS (361 aa)) folds into the PTS EIIC type-1 domain. 10 consecutive transmembrane segments (helical) span residues 126-146 (FATI…LLGF), 168-188 (LILY…ILIG), 194-214 (AFGG…LGYN), 232-252 (GIDP…GAGV), 273-293 (TLLI…GVLF), 312-332 (ILAG…FVPV), 345-365 (LFPI…ALYA), 379-399 (GSII…VTLP), 404-424 (FITA…VSYM), and 451-471 (IFAG…AGFL).

The protein resides in the cell inner membrane. The enzyme catalyses N-acetyl-beta-D-muramate(out) + N(pros)-phospho-L-histidyl-[protein] = N-acetyl-beta-D-muramate 6-phosphate(in) + L-histidyl-[protein]. Functionally, the phosphoenolpyruvate-dependent sugar phosphotransferase system (sugar PTS), a major carbohydrate active transport system, catalyzes the phosphorylation of incoming sugar substrates concomitantly with their translocation across the cell membrane. This system is involved in N-acetylmuramic acid (MurNAc) transport, yielding cytoplasmic MurNAc-6-P. Is also able to take up anhydro-N-acetylmuramic acid (anhMurNAc), but cannot phosphorylate the carbon 6, probably because of the 1,6-anhydro ring. In Aliivibrio fischeri (strain ATCC 700601 / ES114) (Vibrio fischeri), this protein is PTS system N-acetylmuramic acid-specific EIIBC component (murP).